The primary structure comprises 215 residues: Heart- and neural crest derivatives-expressed protein 1 (215 aa).

Disordered stretches follow at residues 53–109 (APDF…RTES) and 169–202 (VDGG…KGRT). The segment covering 65-75 (AAAAAATYGPD) has biased composition (low complexity). Residues 92 to 104 (LGRRKGSGPKKER) are compositionally biased toward basic residues. Positions 94 to 146 (RRKGSGPKKERRRTESINSAFAELRECIPNVPADTKLSKIKTLRLATSYIAYL) constitute a bHLH domain. Phosphothreonine; by PLK4 is present on Thr107. Ser109 bears the Phosphoserine; by PLK4 mark.

In terms of assembly, efficient DNA binding requires dimerization with another bHLH protein. Forms homodimers and heterodimers with TCF3 gene products E12 and E47, HAND2 and HEY1, HEY2 and HEYL (hairy-related transcription factors). Interacts with MDFIC. Interacts with SOX15; the interaction enhances HAND1-induced differentiation of trophoblast giant cells. Phosphorylation by PLK4 disrupts the interaction with MDFIC and leads to translocation into the nucleoplasm, allowing dimerization and transcription factor activity.

It is found in the nucleus. Its subcellular location is the nucleoplasm. The protein resides in the nucleolus. Functionally, transcription factor that plays an essential role in both trophoblast giant cell differentiation and in cardiac morphogenesis. Binds the DNA sequence 5'-NRTCTG-3' (non-canonical E-box). Acts as a transcriptional repressor of SOX15. In the adult, could be required for ongoing expression of cardiac-specific genes. This is Heart- and neural crest derivatives-expressed protein 1 (HAND1) from Oryctolagus cuniculus (Rabbit).